The primary structure comprises 340 residues: UDP-3-O-acylglucosamine N-acyltransferase (340 aa).

Catalysis depends on histidine 238, which acts as the Proton acceptor.

Belongs to the transferase hexapeptide repeat family. LpxD subfamily. As to quaternary structure, homotrimer.

The catalysed reaction is a UDP-3-O-[(3R)-3-hydroxyacyl]-alpha-D-glucosamine + a (3R)-hydroxyacyl-[ACP] = a UDP-2-N,3-O-bis[(3R)-3-hydroxyacyl]-alpha-D-glucosamine + holo-[ACP] + H(+). It participates in bacterial outer membrane biogenesis; LPS lipid A biosynthesis. Functionally, catalyzes the N-acylation of UDP-3-O-acylglucosamine using 3-hydroxyacyl-ACP as the acyl donor. Is involved in the biosynthesis of lipid A, a phosphorylated glycolipid that anchors the lipopolysaccharide to the outer membrane of the cell. The chain is UDP-3-O-acylglucosamine N-acyltransferase from Shewanella frigidimarina (strain NCIMB 400).